The primary structure comprises 163 residues: Putative 4-hydroxy-4-methyl-2-oxoglutarate aldolase (163 aa).

Substrate-binding positions include 76–79 (GDML) and Arg98. Asp99 is an a divalent metal cation binding site.

This sequence belongs to the class II aldolase/RraA-like family. As to quaternary structure, homotrimer. It depends on a divalent metal cation as a cofactor.

The catalysed reaction is 4-hydroxy-4-methyl-2-oxoglutarate = 2 pyruvate. The enzyme catalyses oxaloacetate + H(+) = pyruvate + CO2. Catalyzes the aldol cleavage of 4-hydroxy-4-methyl-2-oxoglutarate (HMG) into 2 molecules of pyruvate. Also contains a secondary oxaloacetate (OAA) decarboxylase activity due to the common pyruvate enolate transition state formed following C-C bond cleavage in the retro-aldol and decarboxylation reactions. This chain is Putative 4-hydroxy-4-methyl-2-oxoglutarate aldolase, found in Pseudomonas putida (strain GB-1).